The following is a 429-amino-acid chain: Adenylosuccinate synthetase (429 aa).

GTP contacts are provided by residues 12–18 and 40–42; these read GDEGKGK and GHT. Asp13 serves as the catalytic Proton acceptor. The Mg(2+) site is built by Asp13 and Gly40. IMP is bound by residues 13–16, 38–41, Thr128, Arg142, Gln223, Thr238, and Arg302; these read DEGK and NAGH. His41 acts as the Proton donor in catalysis. 298 to 304 contacts substrate; sequence ATTGRKR. GTP contacts are provided by residues Arg304, 330 to 332, and 412 to 414; these read KLD and GTG.

This sequence belongs to the adenylosuccinate synthetase family. In terms of assembly, homodimer. The cofactor is Mg(2+).

It is found in the cytoplasm. The enzyme catalyses IMP + L-aspartate + GTP = N(6)-(1,2-dicarboxyethyl)-AMP + GDP + phosphate + 2 H(+). It participates in purine metabolism; AMP biosynthesis via de novo pathway; AMP from IMP: step 1/2. Functionally, plays an important role in the de novo pathway of purine nucleotide biosynthesis. Catalyzes the first committed step in the biosynthesis of AMP from IMP. This chain is Adenylosuccinate synthetase, found in Tropheryma whipplei (strain TW08/27) (Whipple's bacillus).